The chain runs to 419 residues: uncharacterized protein (419 aa).

This is an uncharacterized protein from Schizosaccharomyces pombe (strain 972 / ATCC 24843) (Fission yeast).